A 139-amino-acid polypeptide reads, in one-letter code: Thioredoxin 2 (139 aa).

A zinc finger spans residues 5–18 (CTHCQAINRIPDDR). One can recognise a Thioredoxin domain in the interval 26–139 (GRCGHDLFDG…PFDSWLNESL (114 aa)). A disulfide bridge connects residues C64 and C67.

Belongs to the thioredoxin family.

Its subcellular location is the cytoplasm. It catalyses the reaction [protein]-dithiol + NAD(+) = [protein]-disulfide + NADH + H(+). It carries out the reaction [protein]-dithiol + NADP(+) = [protein]-disulfide + NADPH + H(+). Its function is as follows. Efficient electron donor for the essential enzyme ribonucleotide reductase. Is also able to reduce the interchain disulfide bridges of insulin. The protein is Thioredoxin 2 (trxC) of Escherichia coli O6:H1 (strain CFT073 / ATCC 700928 / UPEC).